The primary structure comprises 278 residues: MAKTIKVIRKKDPKKKNLSDPLAKQKLVWKIGHVLTLVFGLLFSITYFYHVLIFFKYRSWKWLFLRVNKNYSFIQSKRWYMKLLSWSPQVMYRLSLIGVFMSESVTMQQNWVGLNPTWNDLLSSENFHTLLIACLWFFGGGKSFYKILPYMILSYLHLTKMNYELNANKEEKIPLTPKDRKMLHLLAYSELLVILALTLDTILFKTGTSGFMLVIYVGIYWLRLNFSPYAQVAVLELLVKFEKYVPKKYRDKWQVIKNFIYMKMKEHEKRTEEVARYA.

Residues 1 to 34 are Cytoplasmic-facing; the sequence is MAKTIKVIRKKDPKKKNLSDPLAKQKLVWKIGHV. The helical transmembrane segment at 35 to 55 threads the bilayer; the sequence is LTLVFGLLFSITYFYHVLIFF. Residues 56–129 lie on the Extracellular side of the membrane; it reads KYRSWKWLFL…DLLSSENFHT (74 aa). Residues 130 to 150 form a helical membrane-spanning segment; that stretch reads LLIACLWFFGGGKSFYKILPY. Over 151–180 the chain is Cytoplasmic; it reads MILSYLHLTKMNYELNANKEEKIPLTPKDR. A helical transmembrane segment spans residues 181–201; it reads KMLHLLAYSELLVILALTLDT. The Extracellular segment spans residues 202–205; that stretch reads ILFK. The helical transmembrane segment at 206–222 threads the bilayer; sequence TGTSGFMLVIYVGIYWL. Topologically, residues 223 to 278 are cytoplasmic; that stretch reads RLNFSPYAQVAVLELLVKFEKYVPKKYRDKWQVIKNFIYMKMKEHEKRTEEVARYA.

The protein localises to the cell membrane. This is an uncharacterized protein from Saccharomyces cerevisiae (strain ATCC 204508 / S288c) (Baker's yeast).